The sequence spans 1023 residues: MANSQLDRVKGLIDSLNQHTKSAAKSGAGALKNGLGQVKQAGQKLILYIPKDYQASTGSSLNDLVKAAEALGIEVHRSEKNGTALAKELFGTTEKLLGFSERGIALFAPQFDKLLNKNQKLSKSLGGSSEALGQRLNKTQTALSALQSFLGTAIAGMDLDSLLRRRRNGEDVSGSELAKAGVDLAAQLVDNIASATGTVDAFAEQLGKLAMPYLTLALSGLASKLNNLPDLSLAGPGFDAVSGILSVVSASFILSNKDADAGTKAAAGIEISTKILGNIGKAVSQYIIAQRVAAGLSTTAATGGLIGSVVALAISPLSFLNVADKFERAKQLEQYSERFKKFGYEGDSLLASFYRETGAIEAALTTINSVLSARSAGVGAAATGSLVGAPVAALVSAITGIISGILDASKQAIFERVATKLANKIDEWEKKHGKNYFENGYDARHSAFLEDTFELLSQYNKEYSVERVVAITQQRWDVNIGELAGITRKGSDTKSGKAYVDFFEEGKLLEKEPDRFDKKVFDPLEGKIDLSSINKTTLLKFVTPVFTAGEEIRERKQTGKYQYMTELFVKGKEKWVVTGVQSHNAIYDYTNLIQLAIDKKGEKRQVTIESHLGEKNDRIYLSSGSSIVYAGNGHDVAYYDKTDTGYLTFDGQSAQKAGEYIVTKELKADVKVLKEVVKTQDISVGKTCSEKLEYRDYELSPFELGNGIRAKDELHSVEEIIGSNRKDKFFGSRFTDIFHGAKGDDEIYGNDGHDILYGDDGNDVIHGGDGNDHLVGGNGNDRLIGGKGNNFLNGGDGDDELQVFEGQYNVLLGGAGNDILYGSDGTNLFDGGVGNDKIYGGLGKDIYRYSKEYGRHIIIEKGGDDDTLLLSDLSFKDVGFIRIGDDLLVNKRIGGTLYYHEDYNGNALTIKDWFKEGKEGQNNKIEKIVDKDGAYVLSQYLTELTAPGRGINYFNGLEEKLYYGEGYNALPQLRKDIEQIISSTGAFTGDHGKVSVGSGGPLVYNNSANNVANSLSYSLAQAA.

The next 3 helical transmembrane spans lie at 226 to 256 (NNLP…ILSN), 297 to 326 (STTA…ADKF), and 367 to 406 (INSV…SGIL). Hemolysin-type calcium-binding repeat units follow at residues 730–747 (FGSR…DDEI), 748–765 (YGND…NDVI), 766–783 (HGGD…NDRL), 784–801 (IGGK…DDEL), 812–829 (LGGA…TNLF), and 830–847 (DGGV…KDIY).

Belongs to the RTX prokaryotic toxin (TC 1.C.11) family. Palmitoylated by ApxIC. The toxin only becomes active when modified.

It localises to the secreted. Its subcellular location is the host cell membrane. Its function is as follows. One of the virulence factors of A.pleuropneumoniae, which has a strong hemolytic activity and is cytotoxic for alveolar macrophages and neutrophils. This Actinobacillus pleuropneumoniae (Haemophilus pleuropneumoniae) protein is RTX-I toxin determinant A from serotypes 1/9 (apxIA).